The sequence spans 305 residues: Heme A synthase (305 aa).

The Cytoplasmic portion of the chain corresponds to 1-6 (MKKFLK). The chain crosses the membrane as a helical span at residues 7 to 27 (VWSVLTIICMTVVVFGGALVT). Topologically, residues 28–63 (KTGSADGCGNSWPLCNGQLVRLTDVTPEKLIEFMHR) are extracellular. Cys35 and Cys42 are disulfide-bonded. Residue Glu59 is part of the active site. His62 serves as a coordination point for heme o. A helical transmembrane segment spans residues 64-84 (MTTGISSIFVIVLAICAWIYM). Residues 85–92 (KNRRETKP) lie on the Cytoplasmic side of the membrane. A helical transmembrane segment spans residues 93-113 (LAIIAVLFLIIQALMGMAAVV). Residues 114-122 (WGQNPYIMA) lie on the Extracellular side of the membrane. Residues 123-143 (LHFGISIICYASIVLLALMIF) form a helical membrane-spanning segment. Residue His124 coordinates heme o. The Cytoplasmic segment spans residues 144–160 (EVDRKFDARNLVMGTKL). A helical transmembrane segment spans residues 161–181 (RINIYALTIYTYLAVYTGALV). The Extracellular portion of the chain corresponds to 182–212 (RHEKASMAVPVWPFENGKFIMPDSVQDYVQY). The chain crosses the membrane as a helical span at residues 213 to 233 (FHRVAAFILIVWLLYVTWLVF). Heme b is bound at residue His214. At 234–240 (RDYRRYR) the chain is on the cytoplasmic side. Residues 241–261 (VLTFSMVLSLLFIALQAVTGA) traverse the membrane as a helical segment. At 262–271 (LSVYTGVNLY) the chain is on the extracellular side. A helical transmembrane segment spans residues 272–292 (IALAHSLIITMLFALLCYLCL). Residue His276 coordinates heme b. Residues 293 to 305 (LASRSKSNRLRIK) are Cytoplasmic-facing.

It belongs to the COX15/CtaA family. Type 1 subfamily. In terms of assembly, interacts with CtaB. Requires heme b as cofactor.

Its subcellular location is the cell membrane. The catalysed reaction is Fe(II)-heme o + 2 A + H2O = Fe(II)-heme a + 2 AH2. The protein operates within porphyrin-containing compound metabolism; heme A biosynthesis; heme A from heme O: step 1/1. Functionally, catalyzes the conversion of heme O to heme A by two successive hydroxylations of the methyl group at C8. The first hydroxylation forms heme I, the second hydroxylation results in an unstable dihydroxymethyl group, which spontaneously dehydrates, resulting in the formyl group of heme A. In Listeria welshimeri serovar 6b (strain ATCC 35897 / DSM 20650 / CCUG 15529 / CIP 8149 / NCTC 11857 / SLCC 5334 / V8), this protein is Heme A synthase.